A 595-amino-acid polypeptide reads, in one-letter code: DNA-binding protein REB1 (595 aa).

Basic and acidic residues-rich tracts occupy residues 25–46 (KSGE…KEQD) and 54–71 (DPGR…RDAN). Positions 25-208 (KSGEDDAVNK…IDDHVDDVSV (184 aa)) are disordered. Low complexity predominate over residues 75-84 (AVAAAAVAAA). Over residues 114–123 (KKSKKNKNKL) the composition is skewed to basic residues. Residues 163–176 (NIASQHPDFQQYLN) are compositionally biased toward polar residues. Basic and acidic residues predominate over residues 182–205 (EPKKEKSEERSYGDLSNIDDHVDD). The HTH myb-type domain maps to 333–384 (HIFEQRGKWTPEEDAELARWCAEKEGQWSNIGKVLGRMPEDCRDRWRNYVKC). A DNA-binding region (H-T-H motif) is located at residues 360–382 (WSNIGKVLGRMPEDCRDRWRNYV). The region spanning 385–490 (GPNRAANKWS…QCRYKWNKLL (106 aa)) is the Myb-like domain. A disordered region spans residues 414-456 (TAYEDGEDDEMKDSSTKIEDSGDADMLDVQDSDKKPSISNSKK). The span at 434–443 (SGDADMLDVQ) shows a compositional bias: acidic residues.

Its subcellular location is the nucleus. DNA-binding protein that recognizes sites within both the enhancer and the promoter of rRNA transcription, as well as upstream of many genes transcribed by RNA polymerase II. It is essential for cell growth. May stimulate or inhibit transcription. Specifically recognizes the sequence 5'-CCGGGTA-3' or 5'-CGGGTRR-3' (where R is any purine). This Kluyveromyces lactis (strain ATCC 8585 / CBS 2359 / DSM 70799 / NBRC 1267 / NRRL Y-1140 / WM37) (Yeast) protein is DNA-binding protein REB1 (REB1).